The following is a 352-amino-acid chain: Diacylglycerol acyltransferase/mycolyltransferase Ag85C (352 aa).

The N-terminal stretch at 1–37 (MSFIEKVRKLRGAAATMPRRLAIAAVGASLLSGVAVA) is a signal peptide. 86-87 (LR) contacts substrate. The fibronectin-binding stretch occupies residues 102–112 (FEEFYQSGLSV). Positions 170 and 198 each coordinate substrate. The active-site Nucleophile is serine 170. The active site involves glutamate 274. Residues 276 to 279 (LTLR) and 306 to 308 (HSW) each bind substrate. Histidine 306 is an active-site residue. A disordered region spans residues 332 to 352 (TAAPAQPAQPAQPAQPAQPAT). A compositionally biased stretch (low complexity) spans 333–352 (AAPAQPAQPAQPAQPAQPAT).

The protein belongs to the mycobacterial A85 antigen family. As to quaternary structure, homodimer.

It localises to the secreted. It carries out the reaction an acyl-CoA + a 1,2-diacyl-sn-glycerol = a triacyl-sn-glycerol + CoA. It catalyses the reaction 2 alpha,alpha'-trehalose 6-mycolate = alpha,alpha'-trehalose 6,6'-bismycolate + alpha,alpha-trehalose. The antigen 85 proteins (FbpA, FbpB, FbpC) are responsible for the high affinity of mycobacteria to fibronectin, a large adhesive glycoprotein, which facilitates the attachment of M.tuberculosis to murine alveolar macrophages (AMs). They also help to maintain the integrity of the cell wall by catalyzing the transfer of mycolic acids to cell wall arabinogalactan and through the synthesis of alpha,alpha-trehalose dimycolate (TDM, cord factor). They catalyze the transfer of a mycoloyl residue from one molecule of alpha,alpha-trehalose monomycolate (TMM) to another TMM, leading to the formation of TDM. The polypeptide is Diacylglycerol acyltransferase/mycolyltransferase Ag85C (fbpC) (Mycobacterium avium).